The following is a 445-amino-acid chain: Phosphoglucosamine mutase (445 aa).

Residue S102 is the Phosphoserine intermediate of the active site. Positions 102, 241, 243, and 245 each coordinate Mg(2+). Residue S102 is modified to Phosphoserine.

It belongs to the phosphohexose mutase family. The cofactor is Mg(2+). Post-translationally, activated by phosphorylation.

The catalysed reaction is alpha-D-glucosamine 1-phosphate = D-glucosamine 6-phosphate. Its function is as follows. Catalyzes the conversion of glucosamine-6-phosphate to glucosamine-1-phosphate. This chain is Phosphoglucosamine mutase, found in Shewanella oneidensis (strain ATCC 700550 / JCM 31522 / CIP 106686 / LMG 19005 / NCIMB 14063 / MR-1).